The chain runs to 186 residues: Phosphoheptose isomerase (186 aa).

In terms of domain architecture, SIS spans 33 to 186; that stretch reads LCECLKKGGK…TLCQIIDEGF (154 aa). A substrate-binding site is contributed by 48-50; the sequence is NGG. Zn(2+)-binding residues include His57 and Glu61. Residues Glu61, 90-91, 116-118, Ser121, and Gln168 contribute to the substrate site; these read ND and STS. Gln168 and His176 together coordinate Zn(2+).

The protein belongs to the SIS family. GmhA subfamily. In terms of assembly, homotetramer. The cofactor is Zn(2+).

The protein resides in the cytoplasm. It catalyses the reaction 2 D-sedoheptulose 7-phosphate = D-glycero-alpha-D-manno-heptose 7-phosphate + D-glycero-beta-D-manno-heptose 7-phosphate. It participates in carbohydrate biosynthesis; D-glycero-D-manno-heptose 7-phosphate biosynthesis; D-glycero-alpha-D-manno-heptose 7-phosphate and D-glycero-beta-D-manno-heptose 7-phosphate from sedoheptulose 7-phosphate: step 1/1. Its function is as follows. Catalyzes the isomerization of sedoheptulose 7-phosphate in D-glycero-D-manno-heptose 7-phosphate. The polypeptide is Phosphoheptose isomerase (Campylobacter jejuni subsp. jejuni serotype O:6 (strain 81116 / NCTC 11828)).